Consider the following 467-residue polypeptide: Variant surface glycoprotein 7 (467 aa).

Positions 77–87 (TIAAGATNTKL) are enriched in polar residues. A disordered region spans residues 77-133 (TIAAGATNTKLSGHHPNQGRRGRRRSSSARPNNSKGNSPSKRAGGAVRGETPASGRL). The span at 93–103 (NQGRRGRRRSS) shows a compositional bias: basic residues. Polar residues predominate over residues 107 to 116 (PNNSKGNSPS). N-linked (GlcNAc...) asparagine glycans are attached at residues Asn-108 and Asn-252. Positions 382-407 (AEKVENPRSQGNPETAENKKEGGNTA) are disordered. Asn-416 is a glycosylation site (N-linked (GlcNAc...) asparagine). The GPI-anchor amidated aspartate moiety is linked to residue Asp-444. The propeptide at 445–467 (SSFLLSKQFALSVVSAAFAALLF) is removed in mature form.

It is found in the cell membrane. VSG forms a coat on the surface of the parasite. The trypanosome evades the immune response of the host by expressing a series of antigenically distinct VSGs from an estimated 1000 VSG genes. In Trypanosoma brucei rhodesiense, this protein is Variant surface glycoprotein 7.